The primary structure comprises 441 residues: tRNA(Ile)-lysidine synthase (441 aa).

28–33 (SGGTDS) lines the ATP pocket.

It belongs to the tRNA(Ile)-lysidine synthase family.

Its subcellular location is the cytoplasm. It catalyses the reaction cytidine(34) in tRNA(Ile2) + L-lysine + ATP = lysidine(34) in tRNA(Ile2) + AMP + diphosphate + H(+). In terms of biological role, ligates lysine onto the cytidine present at position 34 of the AUA codon-specific tRNA(Ile) that contains the anticodon CAU, in an ATP-dependent manner. Cytidine is converted to lysidine, thus changing the amino acid specificity of the tRNA from methionine to isoleucine. The sequence is that of tRNA(Ile)-lysidine synthase from Orientia tsutsugamushi (strain Boryong) (Rickettsia tsutsugamushi).